The sequence spans 124 residues: Small ribosomal subunit protein uS12 (124 aa).

Positions 1-28 (MPTISQLIGSERKRLTRKTKSPALKSCP) are disordered. Asp89 bears the 3-methylthioaspartic acid mark. The disordered stretch occupies residues 104-124 (TAGVKDRRQSRSKYGAKAPKD).

It belongs to the universal ribosomal protein uS12 family. As to quaternary structure, part of the 30S ribosomal subunit. Contacts proteins S8 and S17. May interact with IF1 in the 30S initiation complex.

Functionally, with S4 and S5 plays an important role in translational accuracy. Its function is as follows. Interacts with and stabilizes bases of the 16S rRNA that are involved in tRNA selection in the A site and with the mRNA backbone. Located at the interface of the 30S and 50S subunits, it traverses the body of the 30S subunit contacting proteins on the other side and probably holding the rRNA structure together. The combined cluster of proteins S8, S12 and S17 appears to hold together the shoulder and platform of the 30S subunit. This chain is Small ribosomal subunit protein uS12, found in Prochlorococcus marinus (strain MIT 9312).